The following is a 101-amino-acid chain: Urease subunit beta (101 aa).

It belongs to the urease beta subunit family. Heterotrimer of UreA (gamma), UreB (beta) and UreC (alpha) subunits. Three heterotrimers associate to form the active enzyme.

The protein localises to the cytoplasm. It catalyses the reaction urea + 2 H2O + H(+) = hydrogencarbonate + 2 NH4(+). It participates in nitrogen metabolism; urea degradation; CO(2) and NH(3) from urea (urease route): step 1/1. In Mesorhizobium japonicum (strain LMG 29417 / CECT 9101 / MAFF 303099) (Mesorhizobium loti (strain MAFF 303099)), this protein is Urease subunit beta.